The chain runs to 134 residues: MSYIKRDHTALRDIAMKTFLKVVGLAASLSAASVAFSSYQLIIKNNYNQTVAISLFDDQGGTHDAGEVEANGQTKITAHLDQASGFCLNVAGKREVVCSYKSGSHPNGTITIDSTGRYCIYNNTKKISGGHGCG.

Positions 1 to 37 (MSYIKRDHTALRDIAMKTFLKVVGLAASLSAASVAFS) are cleaved as a signal peptide.

This is an uncharacterized protein from Coxiella burnetii (strain RSA 493 / Nine Mile phase I).